The sequence spans 190 residues: Elongation factor P 2 (190 aa).

The protein belongs to the elongation factor P family.

It is found in the cytoplasm. It participates in protein biosynthesis; polypeptide chain elongation. Involved in peptide bond synthesis. Stimulates efficient translation and peptide-bond synthesis on native or reconstituted 70S ribosomes in vitro. Probably functions indirectly by altering the affinity of the ribosome for aminoacyl-tRNA, thus increasing their reactivity as acceptors for peptidyl transferase. This chain is Elongation factor P 2 (efp2), found in Chlamydia caviae (strain ATCC VR-813 / DSM 19441 / 03DC25 / GPIC) (Chlamydophila caviae).